A 418-amino-acid polypeptide reads, in one-letter code: MKATDLFHVTALVAGALALEHQQPLIGDLSQDLNHIIDSSPLLSFHRALVQIPSISEHEKNVGEYVLDFLSSQNLTVEKQIVTPESDTEEERFNIYAYVGKNRQPDVLVTSHIDTVPPFIPYSLHAPTSGTSFIRTDLVIAGRGTVDAKASVAAIVFAALETLDENPNASIGLLFDVGEENSGVGMKHFSNSELNPTPPTYHTVIFGEPTELSLVAAHKGTLGFKLVAEGKAAHSGYPWLGESAISSLIPVLAHLDTLQDLPPEKGGLLRSETLGKSTLNIGRVHGGIAANVVPAHAEAAISVRLAAGTPEDTRTIIERAVAKVTSGDRSVYPDFGDRKAGAPPQYFDVDVDGFEVITVNYGTDAPALKIHDQRTQRVKRYLYGPGSILVAHADNEAITVGELEEAVRGYKRLIAASL.

A signal peptide spans 1 to 18 (MKATDLFHVTALVAGALA). Asn74 is a glycosylation site (N-linked (GlcNAc...) asparagine). A Zn(2+)-binding site is contributed by Asp147. N-linked (GlcNAc...) asparagine glycosylation occurs at Asn168. The Proton acceptor role is filled by Glu179. Glu180 contacts Zn(2+).

This sequence belongs to the peptidase M20A family. Requires Zn(2+) as cofactor.

It localises to the secreted. The polypeptide is Probable carboxypeptidase AO090166000075 (Aspergillus oryzae (strain ATCC 42149 / RIB 40) (Yellow koji mold)).